The primary structure comprises 752 residues: DNA ligase (752 aa).

Residues 48-52, 97-98, and E131 each bind NAD(+); these read DADYD and SL. K133 serves as the catalytic N6-AMP-lysine intermediate. NAD(+)-binding residues include R154, E189, K305, and K329. Zn(2+)-binding residues include C434, C437, C452, and C458. Positions 599–615 are enriched in basic and acidic residues; the sequence is ADEGRRASLQPQRDKAW. The interval 599–618 is disordered; it reads ADEGRRASLQPQRDKAWADT. One can recognise a BRCT domain in the interval 673–752; that stretch reads ATQSAVAGLT…EQWLDRIGDA (80 aa).

It belongs to the NAD-dependent DNA ligase family. LigA subfamily. Requires Mg(2+) as cofactor. Mn(2+) serves as cofactor.

The catalysed reaction is NAD(+) + (deoxyribonucleotide)n-3'-hydroxyl + 5'-phospho-(deoxyribonucleotide)m = (deoxyribonucleotide)n+m + AMP + beta-nicotinamide D-nucleotide.. DNA ligase that catalyzes the formation of phosphodiester linkages between 5'-phosphoryl and 3'-hydroxyl groups in double-stranded DNA using NAD as a coenzyme and as the energy source for the reaction. It is essential for DNA replication and repair of damaged DNA. This is DNA ligase from Jannaschia sp. (strain CCS1).